The chain runs to 125 residues: Small ribosomal subunit protein eS25 (125 aa).

The segment covering 1-23 (MPPKDDKKKKDAGKSAKKDKDPV) has biased composition (basic and acidic residues). A disordered region spans residues 1-38 (MPPKDDKKKKDAGKSAKKDKDPVNKSGGKAKKKKWSKG). Positions 28-38 (GKAKKKKWSKG) are enriched in basic residues. Residue Lys-43 is modified to N6-acetyllysine. Lys-52 is subject to N6-acetyllysine; alternate. Lys-52 carries the N6-succinyllysine; alternate modification. Lys-60 and Lys-66 each carry N6-acetyllysine. Lys-94 bears the N6-acetyllysine; alternate mark. At Lys-94 the chain carries N6-succinyllysine; alternate.

This sequence belongs to the eukaryotic ribosomal protein eS25 family. As to quaternary structure, component of the small ribosomal subunit.

It localises to the cytoplasm. Its function is as follows. Component of the small ribosomal subunit. The ribosome is a large ribonucleoprotein complex responsible for the synthesis of proteins in the cell. In Homo sapiens (Human), this protein is Small ribosomal subunit protein eS25 (RPS25).